The sequence spans 1174 residues: Male determiner protein Mdmd(V) (1174 aa).

Over residues 1-15 (MNATDAESRKPENKP) the composition is skewed to basic and acidic residues. Disordered stretches follow at residues 1 to 51 (MNAT…SGQR), 79 to 110 (RKDGSNEMLPKEDSINTNHNYTTDSNEHPVEL), and 136 to 259 (KQLS…LRRS). Residues 16 to 35 (SSESSSSGSTSGSSDGEVSS) show a composition bias toward low complexity. Residues 36–47 (KTYFKNNKSKVL) are compositionally biased toward polar residues. The span at 79–92 (RKDGSNEMLPKEDS) shows a compositional bias: basic and acidic residues. Positions 93-102 (INTNHNYTTD) are enriched in polar residues. Residues 138–153 (LSAYRSRSRSTRLSYS) show a composition bias toward low complexity. Residues 167-180 (SRYKKSVLRSRRTS) are compositionally biased toward basic residues. The span at 183–200 (HGRDSSTTKRSVSRDKDN) shows a compositional bias: basic and acidic residues. Over residues 201-223 (RLRRRIGSSRSHTRSHSRFRRSE) the composition is skewed to basic residues. Residues 235–259 (RSQERRHERRRSMSSDYERIALRRS) show a composition bias toward basic and acidic residues. The region spanning 348–531 (KKYIHGYINK…KVLFQVRRDG (184 aa)) is the MIF4G domain. Low complexity predominate over residues 597-608 (DSDGSFGSGSNS). The tract at residues 597 to 616 (DSDGSFGSGSNSETALSDCD) is disordered. Positions 641-757 (ALRRTIYLTL…SWDVLDCIKL (117 aa)) constitute an MI domain. The segment covering 840–857 (SAPSSSSSSSLSSELSAP) has biased composition (low complexity). 2 disordered regions span residues 840–1045 (SAPS…SRTK) and 1095–1133 (RKDNYGNRQNHEISQRHDSEIKRRREERKKRHHEKNHSR). Residues 869 to 909 (KKKHKGKNKKMTKKKNPSKKKEKTKKIVGKNKIAAKNKTIK) show a composition bias toward basic residues. Positions 910-924 (RRTDKDNSSSKDNFL) are enriched in basic and acidic residues. Low complexity predominate over residues 926–957 (SESSSNESISLDSLSSELFAPSSYSSSESSND). The span at 963–1001 (KHKGKNKKMTKKKNPSNKREKTKKKLSKNKKAPNKNTKK) shows a compositional bias: basic residues. Residues 1010–1020 (SSESSISESKS) are compositionally biased toward low complexity. Positions 1034–1045 (RKKRVTSKSRTK) are enriched in basic residues. Basic and acidic residues predominate over residues 1095-1118 (RKDNYGNRQNHEISQRHDSEIKRR). Positions 1119 to 1130 (REERKKRHHEKN) are enriched in basic residues.

The protein belongs to the CWC22 family. Component of the spliceosome C complex.

It localises to the nucleus speckle. In terms of biological role, male determiner protein (M-factor) that controls male somatic sexual differentiation. Acts as a dominant factor that regulates the mRNA splicing of transformer (tra) and doublesex (dsx) transcripts and promotes expression of male splice forms of tra and dsx. Probably acts as a component of the spliceosome C complex required for mRNA splicing factor and exon-junction complex (EJC) assembly. Hinders eIF4AIII from non-specifically binding RNA and escorts it to the splicing machinery to promote EJC assembly on mature mRNAs. The sequence is that of Male determiner protein Mdmd(V) from Musca domestica (House fly).